Here is a 397-residue protein sequence, read N- to C-terminus: Tryptophan synthase beta chain 1 (397 aa).

An N6-(pyridoxal phosphate)lysine modification is found at lysine 94.

The protein belongs to the TrpB family. As to quaternary structure, tetramer of two alpha and two beta chains. Requires pyridoxal 5'-phosphate as cofactor.

It carries out the reaction (1S,2R)-1-C-(indol-3-yl)glycerol 3-phosphate + L-serine = D-glyceraldehyde 3-phosphate + L-tryptophan + H2O. Its pathway is amino-acid biosynthesis; L-tryptophan biosynthesis; L-tryptophan from chorismate: step 5/5. In terms of biological role, the beta subunit is responsible for the synthesis of L-tryptophan from indole and L-serine. The chain is Tryptophan synthase beta chain 1 (trpB1) from Archaeoglobus fulgidus (strain ATCC 49558 / DSM 4304 / JCM 9628 / NBRC 100126 / VC-16).